Here is a 491-residue protein sequence, read N- to C-terminus: 1-aminocyclopropane-1-carboxylate synthase (491 aa).

An N6-(pyridoxal phosphate)lysine modification is found at Lys-278.

The protein belongs to the class-I pyridoxal-phosphate-dependent aminotransferase family. As to quaternary structure, homodimer. Requires pyridoxal 5'-phosphate as cofactor.

It carries out the reaction S-adenosyl-L-methionine = 1-aminocyclopropane-1-carboxylate + S-methyl-5'-thioadenosine + H(+). Its pathway is alkene biosynthesis; ethylene biosynthesis via S-adenosyl-L-methionine; ethylene from S-adenosyl-L-methionine: step 1/2. Functionally, catalyzes the formation of 1-aminocyclopropane-1-carboxylate, a direct precursor of ethylene in higher plants. This chain is 1-aminocyclopropane-1-carboxylate synthase (ACS1), found in Nicotiana tabacum (Common tobacco).